A 289-amino-acid polypeptide reads, in one-letter code: MQGVMSKYQINAPAKINLFLHVVGKSTSGYHVLESVFAFIKLYDTLEIEIGSKNRGVEFVQFSGISKHDNTVQRAIGHLVRRCAPGVAKNVYVKVTKNIPVSAGLAGGSADAAAIIRLLGKNWGISEAGMNGVAASVGSDVPVCLQSRTAFVCGMGENVKLLPHARLPNYVVLVRPNDVYLSTRSVFDAYACKEFSKSIGNPPEASDGLLSLVMQSRNDLTDTAILLVPEVKKILAELQSLGGCILSRMSGSGATCFALFEDGEAASDGVRYLKGRHPEWWVYETEISQ.

Lys15 is an active-site residue. Residue 100 to 110 participates in ATP binding; that stretch reads PVSAGLAGGSA. Residue Asp140 is part of the active site.

The protein belongs to the GHMP kinase family. IspE subfamily.

The enzyme catalyses 4-CDP-2-C-methyl-D-erythritol + ATP = 4-CDP-2-C-methyl-D-erythritol 2-phosphate + ADP + H(+). Its pathway is isoprenoid biosynthesis; isopentenyl diphosphate biosynthesis via DXP pathway; isopentenyl diphosphate from 1-deoxy-D-xylulose 5-phosphate: step 3/6. Catalyzes the phosphorylation of the position 2 hydroxy group of 4-diphosphocytidyl-2C-methyl-D-erythritol. The chain is 4-diphosphocytidyl-2-C-methyl-D-erythritol kinase from Anaplasma marginale (strain Florida).